The chain runs to 403 residues: Ribonuclease T2-like (403 aa).

A signal peptide spans 1–19 (MLALILTISICIFLKGSTC). 4 cysteine pairs are disulfide-bonded: C36–C55, C44–C91, C54–C158, and C99–C150. N-linked (GlcNAc...) asparagine glycosylation is present at N78. Catalysis depends on residues H84, E143, and H147. N175 carries an N-linked (GlcNAc...) asparagine glycan. A disulfide bridge connects residues C224 and C259. A disordered region spans residues 268-288 (PKNGFNPGPQPPKSPRKGYLE).

This sequence belongs to the RNase T2 family.

It is found in the vacuole lumen. Its subcellular location is the cytoplasm. The catalysed reaction is a ribonucleotidyl-ribonucleotide-RNA + H2O = a 3'-end 3'-phospho-ribonucleotide-RNA + a 5'-end dephospho-ribonucleoside-RNA + H(+). Rnase which modulates cell survival under stress conditions. Released from the vacuole to the cytoplasm during stress to promote tRNA and rRNA cleavage and to activate separately a downstream pathway that promotes cell death. Involved in cell size, vacuolar morphology and growth at high temperatures and high salt concentration. The polypeptide is Ribonuclease T2-like (RNY1) (Debaryomyces hansenii (strain ATCC 36239 / CBS 767 / BCRC 21394 / JCM 1990 / NBRC 0083 / IGC 2968) (Yeast)).